A 23-amino-acid polypeptide reads, in one-letter code: Dahlein-4.2 (23 aa).

As to expression, expressed by the skin dorsal glands.

The protein resides in the secreted. Its function is as follows. Has no antimicrobial activity. The sequence is that of Dahlein-4.2 from Ranoidea dahlii (Dahl's aquatic frog).